Reading from the N-terminus, the 201-residue chain is 3-isopropylmalate dehydratase small subunit (201 aa).

Belongs to the LeuD family. LeuD type 1 subfamily. As to quaternary structure, heterodimer of LeuC and LeuD.

It carries out the reaction (2R,3S)-3-isopropylmalate = (2S)-2-isopropylmalate. Its pathway is amino-acid biosynthesis; L-leucine biosynthesis; L-leucine from 3-methyl-2-oxobutanoate: step 2/4. Catalyzes the isomerization between 2-isopropylmalate and 3-isopropylmalate, via the formation of 2-isopropylmaleate. The chain is 3-isopropylmalate dehydratase small subunit from Shewanella putrefaciens (strain CN-32 / ATCC BAA-453).